The chain runs to 291 residues: ATP synthase gamma chain (291 aa).

This sequence belongs to the ATPase gamma chain family. In terms of assembly, F-type ATPases have 2 components, CF(1) - the catalytic core - and CF(0) - the membrane proton channel. CF(1) has five subunits: alpha(3), beta(3), gamma(1), delta(1), epsilon(1). CF(0) has three main subunits: a, b and c.

The protein localises to the cell inner membrane. Functionally, produces ATP from ADP in the presence of a proton gradient across the membrane. The gamma chain is believed to be important in regulating ATPase activity and the flow of protons through the CF(0) complex. The chain is ATP synthase gamma chain from Xanthobacter autotrophicus (strain ATCC BAA-1158 / Py2).